The chain runs to 239 residues: tRNA (guanine-N(7)-)-methyltransferase (239 aa).

E68, E93, D120, and D143 together coordinate S-adenosyl-L-methionine. D143 is an active-site residue. Residues K147, D180, and 217-220 each bind substrate; that span reads TKFE.

The protein belongs to the class I-like SAM-binding methyltransferase superfamily. TrmB family.

The enzyme catalyses guanosine(46) in tRNA + S-adenosyl-L-methionine = N(7)-methylguanosine(46) in tRNA + S-adenosyl-L-homocysteine. It participates in tRNA modification; N(7)-methylguanine-tRNA biosynthesis. Catalyzes the formation of N(7)-methylguanine at position 46 (m7G46) in tRNA. This chain is tRNA (guanine-N(7)-)-methyltransferase, found in Vibrio parahaemolyticus serotype O3:K6 (strain RIMD 2210633).